The chain runs to 159 residues: Putative ribosomal RNA large subunit methyltransferase H (159 aa).

S-adenosyl-L-methionine is bound by residues leucine 76, glycine 108, and 127–132; that span reads LSPLTF.

Belongs to the RNA methyltransferase RlmH family.

The protein resides in the cytoplasm. It catalyses the reaction pseudouridine(1915) in 23S rRNA + S-adenosyl-L-methionine = N(3)-methylpseudouridine(1915) in 23S rRNA + S-adenosyl-L-homocysteine + H(+). Functionally, specifically methylates the pseudouridine at position 1915 (m3Psi1915) in 23S rRNA. This Methanoregula boonei (strain DSM 21154 / JCM 14090 / 6A8) protein is Putative ribosomal RNA large subunit methyltransferase H.